Here is a 368-residue protein sequence, read N- to C-terminus: Agmatine deiminase (368 aa).

Cys357 functions as the Amidino-cysteine intermediate in the catalytic mechanism.

Belongs to the agmatine deiminase family. Homodimer.

It catalyses the reaction agmatine + H2O = N-carbamoylputrescine + NH4(+). The protein operates within amine and polyamine biosynthesis; putrescine biosynthesis via agmatine pathway; N-carbamoylputrescine from agmatine: step 1/1. Mediates the hydrolysis of agmatine into N-carbamoylputrescine in the arginine decarboxylase (ADC) pathway of putrescine biosynthesis, a basic polyamine. The protein is Agmatine deiminase of Pseudomonas putida (strain ATCC 47054 / DSM 6125 / CFBP 8728 / NCIMB 11950 / KT2440).